Consider the following 254-residue polypeptide: 14-3-3 protein 2 (254 aa).

The protein belongs to the 14-3-3 family. Homodimer.

The chain is 14-3-3 protein 2 (TFT2) from Solanum lycopersicum (Tomato).